Here is a 130-residue protein sequence, read N- to C-terminus: Small ribosomal subunit protein uS11 (130 aa).

This sequence belongs to the universal ribosomal protein uS11 family. In terms of assembly, part of the 30S ribosomal subunit. Interacts with proteins S7 and S18. Binds to IF-3.

Located on the platform of the 30S subunit, it bridges several disparate RNA helices of the 16S rRNA. Forms part of the Shine-Dalgarno cleft in the 70S ribosome. The sequence is that of Small ribosomal subunit protein uS11 from Nitrobacter hamburgensis (strain DSM 10229 / NCIMB 13809 / X14).